A 456-amino-acid chain; its full sequence is Enolase (456 aa).

A (2R)-2-phosphoglycerate-binding site is contributed by Q164. E207 serves as the catalytic Proton donor. Residues D244, E287, and D314 each contribute to the Mg(2+) site. 4 residues coordinate (2R)-2-phosphoglycerate: K339, R368, S369, and K390. K339 functions as the Proton acceptor in the catalytic mechanism.

The protein belongs to the enolase family. As to quaternary structure, component of the RNA degradosome, a multiprotein complex involved in RNA processing and mRNA degradation. It depends on Mg(2+) as a cofactor.

The protein resides in the cytoplasm. It localises to the secreted. Its subcellular location is the cell surface. It carries out the reaction (2R)-2-phosphoglycerate = phosphoenolpyruvate + H2O. It participates in carbohydrate degradation; glycolysis; pyruvate from D-glyceraldehyde 3-phosphate: step 4/5. Catalyzes the reversible conversion of 2-phosphoglycerate (2-PG) into phosphoenolpyruvate (PEP). It is essential for the degradation of carbohydrates via glycolysis. The sequence is that of Enolase from Francisella tularensis subsp. tularensis (strain FSC 198).